The chain runs to 371 residues: Ferrochelatase (371 aa).

The Fe cation site is built by His218 and Glu299.

Belongs to the ferrochelatase family.

It is found in the cytoplasm. It catalyses the reaction heme b + 2 H(+) = protoporphyrin IX + Fe(2+). The protein operates within porphyrin-containing compound metabolism; protoheme biosynthesis; protoheme from protoporphyrin-IX: step 1/1. Its function is as follows. Catalyzes the ferrous insertion into protoporphyrin IX. This is Ferrochelatase from Cupriavidus pinatubonensis (strain JMP 134 / LMG 1197) (Cupriavidus necator (strain JMP 134)).